The chain runs to 538 residues: Cytochrome P450 52A4 (538 aa).

A helical transmembrane segment spans residues 27 to 46 (WYILIPTILLTLNFLSILHT). A heme-binding site is contributed by cysteine 485.

Belongs to the cytochrome P450 family. Heme is required as a cofactor.

It is found in the membrane. Its function is as follows. Together with an NADPH cytochrome P450 the enzyme system catalyzes the terminal hydroxylation as the first step in the assimilation of alkanes and fatty acids. The polypeptide is Cytochrome P450 52A4 (CYP52A4) (Candida maltosa (Yeast)).